The following is a 261-amino-acid chain: NAD-capped RNA hydrolase NudC (261 aa).

Substrate is bound by residues K25 and R69. Zn(2+) is bound by residues C98 and C101. Residue E111 coordinates substrate. Zn(2+)-binding residues include C116 and C119. Y124 provides a ligand contact to substrate. The 124-residue stretch at 125–248 (PQIAPCVIVA…TVARRLIEDT (124 aa)) folds into the Nudix hydrolase domain. Residues A158, E174, and E178 each contribute to the a divalent metal cation site. The short motif at 159–180 (GFVEVGETLEQAVSREVLEESN) is the Nudix box element. A substrate-binding site is contributed by 192-199 (QPWPFPHS). E219 is an a divalent metal cation binding site. A241 contributes to the substrate binding site.

The protein belongs to the Nudix hydrolase family. NudC subfamily. As to quaternary structure, homodimer. The cofactor is Mg(2+). Mn(2+) serves as cofactor. It depends on Zn(2+) as a cofactor.

It carries out the reaction a 5'-end NAD(+)-phospho-ribonucleoside in mRNA + H2O = a 5'-end phospho-adenosine-phospho-ribonucleoside in mRNA + beta-nicotinamide D-ribonucleotide + 2 H(+). The catalysed reaction is NAD(+) + H2O = beta-nicotinamide D-ribonucleotide + AMP + 2 H(+). It catalyses the reaction NADH + H2O = reduced beta-nicotinamide D-ribonucleotide + AMP + 2 H(+). In terms of biological role, mRNA decapping enzyme that specifically removes the nicotinamide adenine dinucleotide (NAD) cap from a subset of mRNAs by hydrolyzing the diphosphate linkage to produce nicotinamide mononucleotide (NMN) and 5' monophosphate mRNA. The NAD-cap is present at the 5'-end of some mRNAs and stabilizes RNA against 5'-processing. Has preference for mRNAs with a 5'-end purine. Catalyzes the hydrolysis of a broad range of dinucleotide pyrophosphates. The chain is NAD-capped RNA hydrolase NudC from Yersinia enterocolitica serotype O:8 / biotype 1B (strain NCTC 13174 / 8081).